Consider the following 181-residue polypeptide: MGLSFTKLFSRLFAKKEMRILMVGLDAAGKTTILYQLKLGEIVTTIPTIGFNVETVEYQYISFTVWDVGGQDKIRPLWRHYFQNTQGLIFVVDSNDRDRVVEARDELHRMLNEDELRDAVLLVFANKQDLPNAMNAAEITDKHGLHSLRQRHWYIQSTCATSGEGLYEGLDWLSNNIANKA.

Residue Gly-2 is the site of N-myristoyl glycine attachment. Residues 24-31 (GLDAAGKT), 67-71 (DVGGQ), and 126-129 (NKQD) contribute to the GTP site.

The protein belongs to the small GTPase superfamily. Arf family.

The protein resides in the golgi apparatus. It carries out the reaction GTP + H2O = GDP + phosphate + H(+). GTP-binding protein involved in protein trafficking; may modulate vesicle budding and uncoating within the Golgi apparatus. The sequence is that of ADP-ribosylation factor 1 (ARF1) from Catharanthus roseus (Madagascar periwinkle).